Reading from the N-terminus, the 157-residue chain is Small ribosomal subunit protein uS7 (157 aa).

The protein belongs to the universal ribosomal protein uS7 family. As to quaternary structure, part of the 30S ribosomal subunit. Contacts proteins S9 and S11.

One of the primary rRNA binding proteins, it binds directly to 16S rRNA where it nucleates assembly of the head domain of the 30S subunit. Is located at the subunit interface close to the decoding center, probably blocks exit of the E-site tRNA. This chain is Small ribosomal subunit protein uS7, found in Hydrogenovibrio crunogenus (strain DSM 25203 / XCL-2) (Thiomicrospira crunogena).